The chain runs to 203 residues: A-type ATP synthase subunit E (203 aa).

Belongs to the V-ATPase E subunit family. Has multiple subunits with at least A(3), B(3), C, D, E, F, H, I and proteolipid K(x).

The protein resides in the cell membrane. Its function is as follows. Component of the A-type ATP synthase that produces ATP from ADP in the presence of a proton gradient across the membrane. The polypeptide is A-type ATP synthase subunit E (Thermococcus kodakarensis (strain ATCC BAA-918 / JCM 12380 / KOD1) (Pyrococcus kodakaraensis (strain KOD1))).